The sequence spans 178 residues: Interleukin-10 (178 aa).

An N-terminal signal peptide occupies residues 1–18 (MHSSALLCCLVFLTGVRA). 2 cysteine pairs are disulfide-bonded: Cys30/Cys126 and Cys80/Cys132. N-linked (GlcNAc...) asparagine glycosylation occurs at Asn134.

Belongs to the IL-10 family. As to quaternary structure, homodimer. Interacts with IL10RA and IL10RB.

The protein localises to the secreted. In terms of biological role, major immune regulatory cytokine that acts on many cells of the immune system where it has profound anti-inflammatory functions, limiting excessive tissue disruption caused by inflammation. Mechanistically, IL10 binds to its heterotetrameric receptor comprising IL10RA and IL10RB leading to JAK1 and STAT2-mediated phosphorylation of STAT3. In turn, STAT3 translocates to the nucleus where it drives expression of anti-inflammatory mediators. Targets antigen-presenting cells (APCs) such as macrophages and monocytes and inhibits their release of pro-inflammatory cytokines including granulocyte-macrophage colony-stimulating factor /GM-CSF, granulocyte colony-stimulating factor/G-CSF, IL-1 alpha, IL-1 beta, IL-6, IL-8 and TNF-alpha. Also interferes with antigen presentation by reducing the expression of MHC-class II and co-stimulatory molecules, thereby inhibiting their ability to induce T cell activation. In addition, controls the inflammatory response of macrophages by reprogramming essential metabolic pathways including mTOR signaling. The sequence is that of Interleukin-10 (IL10) from Saimiri sciureus (Common squirrel monkey).